A 473-amino-acid polypeptide reads, in one-letter code: ATP synthase subunit beta (473 aa).

158 to 165 (GGAGVGKT) contributes to the ATP binding site.

Belongs to the ATPase alpha/beta chains family. In terms of assembly, F-type ATPases have 2 components, CF(1) - the catalytic core - and CF(0) - the membrane proton channel. CF(1) has five subunits: alpha(3), beta(3), gamma(1), delta(1), epsilon(1). CF(0) has three main subunits: a(1), b(2) and c(9-12). The alpha and beta chains form an alternating ring which encloses part of the gamma chain. CF(1) is attached to CF(0) by a central stalk formed by the gamma and epsilon chains, while a peripheral stalk is formed by the delta and b chains. The F(1)F(0) complex interacts with SpoIIIJ and YqjG; YqgA is found in the same complex.

The protein localises to the cell membrane. It is found in the membrane raft. It carries out the reaction ATP + H2O + 4 H(+)(in) = ADP + phosphate + 5 H(+)(out). In terms of biological role, produces ATP from ADP in the presence of a proton gradient across the membrane. The catalytic sites are hosted primarily by the beta subunits. This Bacillus subtilis (strain 168) protein is ATP synthase subunit beta.